Reading from the N-terminus, the 230-residue chain is MTKHQFKLSDPRLLSRIGYQFKQPELLQLALTHRSVSHKYNYERLEFLGDSLLGMIIANYLYHAYPHENEGRLTRMRATLVRQEALGKIATDLQLSRCLILSTGELKSGGHHRESILADTVEAIIGAIYLDSSDLNLLKDIVLKWYTPYLDHIEPTDQLKDPKSRLQEYLQARKKPLPVYEVVDIQGDAPHQHFKVECLVDGLSKIHGEGASRRFAEQAAAAEILKLLEQ.

Residues 10–133 enclose the RNase III domain; it reads DPRLLSRIGY…IIGAIYLDSS (124 aa). Residue glutamate 46 coordinates Mg(2+). The active site involves aspartate 50. Mg(2+)-binding residues include aspartate 119 and glutamate 122. Glutamate 122 is an active-site residue. The region spanning 161 to 230 is the DRBM domain; it reads DPKSRLQEYL…AAEILKLLEQ (70 aa).

It belongs to the ribonuclease III family. In terms of assembly, homodimer. The cofactor is Mg(2+).

It is found in the cytoplasm. It carries out the reaction Endonucleolytic cleavage to 5'-phosphomonoester.. Digests double-stranded RNA. Involved in the processing of primary rRNA transcript to yield the immediate precursors to the large and small rRNAs (23S and 16S). Processes some mRNAs, and tRNAs when they are encoded in the rRNA operon. Processes pre-crRNA and tracrRNA of type II CRISPR loci if present in the organism. This chain is Ribonuclease 3, found in Acinetobacter baumannii (strain SDF).